The sequence spans 551 residues: ATP-dependent DNA helicase XPD (551 aa).

The Helicase ATP-binding domain maps to 1 to 228 (MLKLRDWQEK…KLLNQLREVV (228 aa)). 29–36 (APTGSGKT) is a binding site for ATP. Residues C88, C102, C105, and C137 each coordinate [4Fe-4S] cluster. A DEAH box motif is present at residues 180-183 (DEAH).

Belongs to the helicase family. RAD3/XPD subfamily. Monomer. [4Fe-4S] cluster is required as a cofactor.

The catalysed reaction is Couples ATP hydrolysis with the unwinding of duplex DNA at the replication fork by translocating in the 5'-3' direction. This creates two antiparallel DNA single strands (ssDNA). The leading ssDNA polymer is the template for DNA polymerase III holoenzyme which synthesizes a continuous strand.. It catalyses the reaction ATP + H2O = ADP + phosphate + H(+). ATP-dependent 5'-3' DNA helicase. Thought to be involved in nucleotide excision repair (NER) of DNA. This is ATP-dependent DNA helicase XPD from Sulfolobus acidocaldarius (strain ATCC 33909 / DSM 639 / JCM 8929 / NBRC 15157 / NCIMB 11770).